Reading from the N-terminus, the 305-residue chain is Nuclear egress protein 1 (305 aa).

The segment covering 1–11 (MDRERPRKTRE) has biased composition (basic and acidic residues). Positions 1–24 (MDRERPRKTREPASPGSVLSKRSK) are disordered. The CCCH-type zinc finger occupies 104–230 (CLVLSPLGHA…FALFKTDDLH (127 aa)).

It belongs to the herpesviridae NEC1 protein family. Forms a heterohexameric complex with NEC2. Interacts with capsid vertex specific component 2/CVC2; this interaction directs the capsid to the host inner nuclear membrane to initiate budding. Phosphorylated at serine residues in the N-terminus. This phosphorylation regulates the localization within the inner nuclear membrane.

It localises to the host nucleus inner membrane. Functionally, plays an essential role in virion nuclear egress, the first step of virion release from infected cell. Within the host nucleus, NEC1 interacts with the newly formed capsid through the vertexes and directs it to the inner nuclear membrane by associating with NEC2. Induces the budding of the capsid at the inner nuclear membrane as well as its envelopment into the perinuclear space. There, the NEC1/NEC2 complex promotes the fusion of the enveloped capsid with the outer nuclear membrane and the subsequent release of the viral capsid into the cytoplasm where it will reach the secondary budding sites in the host Golgi or trans-Golgi network. This chain is Nuclear egress protein 1, found in Equus caballus (Horse).